Consider the following 606-residue polypeptide: Sulfite reductase [NADPH] flavoprotein alpha-component (606 aa).

The region spanning 64–202 (VTLISASQTG…QAQQWRQQVV (139 aa)) is the Flavodoxin-like domain. FMN contacts are provided by residues 70–75 (SQTGNA), 117–120 (STQG), and 153–162 (LGDTSYEHFC). Positions 212–234 (QSTAPTQSTTPAAAAITSGGTTT) are enriched in low complexity. The segment at 212 to 235 (QSTAPTQSTTPAAAAITSGGTTTV) is disordered. The region spanning 241 to 455 (TAPLTAQLSV…IEHNDNFRLP (215 aa)) is the FAD-binding FR-type domain. Residues T329, K363, 393 to 396 (RLYS), 411 to 413 (TVG), Y417, and 426 to 429 (GGAS) each bind FAD. Residues 526-527 (SR), 532-536 (KIYVQ), and D568 contribute to the NADP(+) site. Residue Y606 coordinates FAD.

This sequence belongs to the NADPH-dependent sulphite reductase flavoprotein subunit CysJ family. In the N-terminal section; belongs to the flavodoxin family. The protein in the C-terminal section; belongs to the flavoprotein pyridine nucleotide cytochrome reductase family. In terms of assembly, alpha(8)-beta(8). The alpha component is a flavoprotein, the beta component is a hemoprotein. FAD serves as cofactor. The cofactor is FMN.

The catalysed reaction is hydrogen sulfide + 3 NADP(+) + 3 H2O = sulfite + 3 NADPH + 4 H(+). It participates in sulfur metabolism; hydrogen sulfide biosynthesis; hydrogen sulfide from sulfite (NADPH route): step 1/1. Functionally, component of the sulfite reductase complex that catalyzes the 6-electron reduction of sulfite to sulfide. This is one of several activities required for the biosynthesis of L-cysteine from sulfate. The flavoprotein component catalyzes the electron flow from NADPH -&gt; FAD -&gt; FMN to the hemoprotein component. The chain is Sulfite reductase [NADPH] flavoprotein alpha-component from Yersinia pestis bv. Antiqua (strain Antiqua).